We begin with the raw amino-acid sequence, 950 residues long: Voltage-gated inwardly rectifying potassium channel KCNH6 (950 aa).

Residues 1 to 261 are Cytoplasmic-facing; the sequence is MPVRRGHVAP…YSPFKAVWDW (261 aa). The region spanning 41 to 70 is the PAS domain; sequence IIYCNDGFCELFGYSRVEVMQRPCTCDFLT. The PAC domain occupies 92-144; the sequence is CKVDILYYRKDASSFRCLVDVVPVKNEDGAVIMFILNFEDLAQLLAKSSSRSL. A disordered region spans residues 154 to 174; the sequence is LGSEGSHSRPSGQGPGPGRGK. A helical membrane pass occupies residues 262–282; the sequence is LILLLVIYTAVFTPYSAAFLL. The Extracellular portion of the chain corresponds to 283-298; sequence SDQDESQRGTCGYTCS. A helical transmembrane segment spans residues 299–319; that stretch reads PLTVVDLIVDIMFVVDIVINF. The Cytoplasmic segment spans residues 320–340; sequence RTTYVNTNDEVVSHPRRIAVH. A helical membrane pass occupies residues 341-361; the sequence is YFKGWFLIDMVAAIPFDLLIF. At 362-370 the chain is on the extracellular side; sequence RTGSDETTT. A helical; Voltage-sensor membrane pass occupies residues 371–391; sequence LIGLLKTARLLRLVRVARKLD. The Cytoplasmic portion of the chain corresponds to 392–398; the sequence is RYSEYGA. Residues 399–419 form a helical membrane-spanning segment; that stretch reads AVLFLLMCTFALIAHWLACIW. Residues 420-463 lie on the Extracellular side of the membrane; it reads YAIGNVERPYLEPKIGWLDSLGAQLGKQYNGSDPASGPSVQDKY. An intramembrane region (pore-forming) is located at residues 464–484; it reads VTALYFTFSSLTSVGFGNVSP. The Selectivity filter motif lies at 476 to 481; it reads SVGFGN. Residues 485–490 are Extracellular-facing; sequence NTNSEK. A helical membrane pass occupies residues 491–511; that stretch reads VFSICVMLIGSLMYASIFGNV. The Cytoplasmic portion of the chain corresponds to 512–950; it reads SAIIQRLYSG…HGSDPGFTRS (439 aa). The segment at 594–694 is cNMP-binding domain; sequence AFRGASKGCL…IHRADLLEVL (101 aa). Disordered regions lie at residues 719–750 and 890–950; these read GGLQSTPRQAPGHQDPQGFFLNDSQSGAAPSL and VPSS…FTRS. Polar residues predominate over residues 740-750; the sequence is NDSQSGAAPSL. Residues 898–912 are compositionally biased toward low complexity; sequence PGGLLSPLASPLRPL.

Belongs to the potassium channel family. H (Eag) (TC 1.A.1.20) subfamily. Kv11.2/KCNH6 sub-subfamily. The potassium channel is probably composed of a homo- or heterotetrameric complex of pore-forming alpha subunits that can associate only within their subfamily. Highly expressed in celiac and superior mesenteric ganglia, but not detected in brain or in heart. Detected at low levels in retina. Also found in pituitary. Also found in the olfactory bulb (granular and mitral cell layers).

The protein resides in the cell membrane. It carries out the reaction K(+)(in) = K(+)(out). In terms of biological role, pore-forming (alpha) subunit of voltage-gated inwardly rectifying potassium channel. Characterized by unusual gating kinetics by producing relatively small outward currents during membrane depolarization and large inward currents during subsequent repolarization which reflect a rapid inactivation during depolarization and quick recovery from inactivation but slow deactivation (closing) during repolarization. Activates even more slowly than KCNH2. This Rattus norvegicus (Rat) protein is Voltage-gated inwardly rectifying potassium channel KCNH6.